Consider the following 86-residue polypeptide: Small ribosomal subunit protein bS20 (86 aa).

Residues 1–27 (MANNKSAKKRAIQAEKRRQHNASRRSM) form a disordered region.

The protein belongs to the bacterial ribosomal protein bS20 family.

Its function is as follows. Binds directly to 16S ribosomal RNA. In Vibrio vulnificus (strain CMCP6), this protein is Small ribosomal subunit protein bS20.